Consider the following 450-residue polypeptide: Phosphoglucosamine mutase (450 aa).

The active-site Phosphoserine intermediate is Ser101. 4 residues coordinate Mg(2+): Ser101, Asp241, Asp243, and Asp245. Ser101 carries the post-translational modification Phosphoserine.

This sequence belongs to the phosphohexose mutase family. Requires Mg(2+) as cofactor. In terms of processing, activated by phosphorylation.

The enzyme catalyses alpha-D-glucosamine 1-phosphate = D-glucosamine 6-phosphate. In terms of biological role, catalyzes the conversion of glucosamine-6-phosphate to glucosamine-1-phosphate. The sequence is that of Phosphoglucosamine mutase from Listeria monocytogenes serotype 4b (strain F2365).